Here is a 676-residue protein sequence, read N- to C-terminus: Protein kinase C delta type (676 aa).

The C2 domain occupies 1 to 106; it reads MAPFLRIAFN…KNNGKAEFWL (106 aa). A phosphothreonine mark is found at T43 and T50. Y64 bears the Phosphotyrosine mark. S130 bears the Phosphoserine mark. T141 carries the post-translational modification Phosphothreonine. Phosphotyrosine is present on Y155. A Phorbol-ester/DAG-type 1 zinc finger spans residues 158–208; the sequence is NHEFIATFFGQPTFCSVCKDFVWGLNKQGYKCRQCNAAIHKKCIDKIIGRC. Phosphothreonine is present on T218. The Phorbol-ester/DAG-type 2 zinc-finger motif lies at 230 to 280; the sequence is PHRFKVHNYMSPTFCDHCGSLLWGLVKQGLKCEDCGMNVHHKCREKVANLC. 3 positions are modified to phosphoserine; by autocatalysis: S299, S302, and S304. S307 carries the phosphoserine modification. Y313 is subject to Phosphotyrosine. Residue Y334 is modified to Phosphotyrosine; by SRC. A Protein kinase domain is found at 349-603; that stretch reads FIFHKVLGKG…TGNIKIHPFF (255 aa). 355–363 contributes to the ATP binding site; it reads LGKGSFGKV. Residue Y374 is modified to Phosphotyrosine. ATP is bound at residue K378. T451 is modified (phosphothreonine). D473 serves as the catalytic Proton acceptor. Phosphoserine occurs at positions 503 and 506. T507 is subject to Phosphothreonine; by autocatalysis. Y567 bears the Phosphotyrosine mark. In terms of domain architecture, AGC-kinase C-terminal spans 604–675; the sequence is KTINWTLLEK…VNPKFEHLLE (72 aa). S645, S654, S658, and S664 each carry phosphoserine.

This sequence belongs to the protein kinase superfamily. AGC Ser/Thr protein kinase family. PKC subfamily. As to quaternary structure, interacts with PDPK1 (via N-terminal region). Interacts with RAD9A. Interacts with CDCP1. Interacts with MUC1. Interacts with VASP. Interacts with CAVIN3. Interacts with PRKD2 (via N-terminus and zing-finger domain 1 and 2) in response to oxidative stress; the interaction is independent of PRKD2 tyrosine phosphorylation. Interacts with PLSC3; interaction is enhanced by UV irradiation. Interacts with PRKCH upstream open reading frame 2; the interaction leads to inhibition of kinase activity. Post-translationally, autophosphorylated and/or phosphorylated at Thr-507, within the activation loop; phosphorylation at Thr-507 is not a prerequisite for enzymatic activity. Autophosphorylated at Ser-299, Ser-302 and Ser-304. Upon TNFSF10/TRAIL treatment, phosphorylated at Tyr-155; phosphorylation is required for its translocation to the endoplasmic reticulum and cleavage by caspase-3. Phosphorylated at Tyr-313, Tyr-334 and Tyr-567; phosphorylation of Tyr-313 and Tyr-567 following thrombin or zymosan stimulation potentiates its kinase activity. Phosphorylated by protein kinase PDPK1; phosphorylation is inhibited by the apoptotic C-terminal cleavage product of PKN2. Phosphorylated at Tyr-313 through a SYK and SRC mechanism downstream of C-type lectin receptors activation, promoting its activation. Proteolytically cleaved into a catalytic subunit and a regulatory subunit by caspase-3 during apoptosis which results in kinase activation.

The protein localises to the cytoplasm. The protein resides in the perinuclear region. It is found in the nucleus. It localises to the cell membrane. Its subcellular location is the mitochondrion. The protein localises to the endomembrane system. It carries out the reaction L-seryl-[protein] + ATP = O-phospho-L-seryl-[protein] + ADP + H(+). The catalysed reaction is L-threonyl-[protein] + ATP = O-phospho-L-threonyl-[protein] + ADP + H(+). It catalyses the reaction L-tyrosyl-[protein] + ATP = O-phospho-L-tyrosyl-[protein] + ADP + H(+). Its activity is regulated as follows. Novel PKCs (PRKCD, PRKCE, PRKCH and PRKCQ) are calcium-insensitive, but activated by diacylglycerol (DAG) and phosphatidylserine. Three specific sites; Thr-507 (activation loop of the kinase domain), Ser-645 (turn motif) and Ser-664 (hydrophobic region), need to be phosphorylated for its full activation. Activated by caspase-3 (CASP3) cleavage during apoptosis. After cleavage, the pseudosubstrate motif in the regulatory subunit is released from the substrate recognition site of the catalytic subunit, which enables PRKCD to become constitutively activated. The catalytic subunit which displays properties of a sphingosine-dependent protein kinase is activated by D-erythro-sphingosine (Sph) or N,N-dimethyl-D-erythrosphingosine (DMS) or N,N,N-trimethyl-D-erythrosphingosine (TMS), but not by ceramide or Sph-1-P and is strongly inhibited by phosphatidylserine. Inhibited by PRKCH upstream open reading frame 2. Calcium-independent, phospholipid- and diacylglycerol (DAG)-dependent serine/threonine-protein kinase that plays contrasting roles in cell death and cell survival by functioning as a pro-apoptotic protein during DNA damage-induced apoptosis, but acting as an anti-apoptotic protein during cytokine receptor-initiated cell death, is involved in tumor suppression as well as survival of several cancers, is required for oxygen radical production by NADPH oxidase and acts as positive or negative regulator in platelet functional responses. Negatively regulates B cell proliferation and also has an important function in self-antigen induced B cell tolerance induction. Upon DNA damage, activates the promoter of the death-promoting transcription factor BCLAF1/Btf to trigger BCLAF1-mediated p53/TP53 gene transcription and apoptosis. In response to oxidative stress, interact with and activate CHUK/IKKA in the nucleus, causing the phosphorylation of p53/TP53. In the case of ER stress or DNA damage-induced apoptosis, can form a complex with the tyrosine-protein kinase ABL1 which trigger apoptosis independently of p53/TP53. In cytosol can trigger apoptosis by activating MAPK11 or MAPK14, inhibiting AKT1 and decreasing the level of X-linked inhibitor of apoptosis protein (XIAP), whereas in nucleus induces apoptosis via the activation of MAPK8 or MAPK9. Upon ionizing radiation treatment, is required for the activation of the apoptosis regulators BAX and BAK, which trigger the mitochondrial cell death pathway. Can phosphorylate MCL1 and target it for degradation which is sufficient to trigger for BAX activation and apoptosis. Is required for the control of cell cycle progression both at G1/S and G2/M phases. Mediates phorbol 12-myristate 13-acetate (PMA)-induced inhibition of cell cycle progression at G1/S phase by up-regulating the CDK inhibitor CDKN1A/p21 and inhibiting the cyclin CCNA2 promoter activity. In response to UV irradiation can phosphorylate CDK1, which is important for the G2/M DNA damage checkpoint activation. Can protect glioma cells from the apoptosis induced by TNFSF10/TRAIL, probably by inducing increased phosphorylation and subsequent activation of AKT1. Is highly expressed in a number of cancer cells and promotes cell survival and resistance against chemotherapeutic drugs by inducing cyclin D1 (CCND1) and hyperphosphorylation of RB1, and via several pro-survival pathways, including NF-kappa-B, AKT1 and MAPK1/3 (ERK1/2). Involved in antifungal immunity by mediating phosphorylation and activation of CARD9 downstream of C-type lectin receptors activation, promoting interaction between CARD9 and BCL10, followed by activation of NF-kappa-B and MAP kinase p38 pathways. Can also act as tumor suppressor upon mitogenic stimulation with PMA or TPA. In N-formyl-methionyl-leucyl-phenylalanine (fMLP)-treated cells, is required for NCF1 (p47-phox) phosphorylation and activation of NADPH oxidase activity, and regulates TNF-elicited superoxide anion production in neutrophils, by direct phosphorylation and activation of NCF1 or indirectly through MAPK1/3 (ERK1/2) signaling pathways. May also play a role in the regulation of NADPH oxidase activity in eosinophil after stimulation with IL5, leukotriene B4 or PMA. In collagen-induced platelet aggregation, acts a negative regulator of filopodia formation and actin polymerization by interacting with and negatively regulating VASP phosphorylation. Downstream of PAR1, PAR4 and CD36/GP4 receptors, regulates differentially platelet dense granule secretion; acts as a positive regulator in PAR-mediated granule secretion, whereas it negatively regulates CD36/GP4-mediated granule release. Phosphorylates MUC1 in the C-terminal and regulates the interaction between MUC1 and beta-catenin. The catalytic subunit phosphorylates 14-3-3 proteins (YWHAB, YWHAZ and YWHAH) in a sphingosine-dependent fashion. Phosphorylates ELAVL1 in response to angiotensin-2 treatment. Phosphorylates mitochondrial phospholipid scramblase 3 (PLSCR3), resulting in increased cardiolipin expression on the mitochondrial outer membrane which facilitates apoptosis. Phosphorylates SMPD1 which induces SMPD1 secretion. This Homo sapiens (Human) protein is Protein kinase C delta type.